The sequence spans 275 residues: 2-dehydro-3-deoxyphosphooctonate aldolase (275 aa).

This sequence belongs to the KdsA family.

Its subcellular location is the cytoplasm. The enzyme catalyses D-arabinose 5-phosphate + phosphoenolpyruvate + H2O = 3-deoxy-alpha-D-manno-2-octulosonate-8-phosphate + phosphate. It participates in carbohydrate biosynthesis; 3-deoxy-D-manno-octulosonate biosynthesis; 3-deoxy-D-manno-octulosonate from D-ribulose 5-phosphate: step 2/3. The protein operates within bacterial outer membrane biogenesis; lipopolysaccharide biosynthesis. This Francisella tularensis subsp. holarctica (strain LVS) protein is 2-dehydro-3-deoxyphosphooctonate aldolase.